A 251-amino-acid polypeptide reads, in one-letter code: Ubiquinone/menaquinone biosynthesis C-methyltransferase UbiE (251 aa).

S-adenosyl-L-methionine-binding positions include Thr74, Asp95, and 123–124 (NA).

Belongs to the class I-like SAM-binding methyltransferase superfamily. MenG/UbiE family.

The catalysed reaction is a 2-demethylmenaquinol + S-adenosyl-L-methionine = a menaquinol + S-adenosyl-L-homocysteine + H(+). The enzyme catalyses a 2-methoxy-6-(all-trans-polyprenyl)benzene-1,4-diol + S-adenosyl-L-methionine = a 5-methoxy-2-methyl-3-(all-trans-polyprenyl)benzene-1,4-diol + S-adenosyl-L-homocysteine + H(+). Its pathway is quinol/quinone metabolism; menaquinone biosynthesis; menaquinol from 1,4-dihydroxy-2-naphthoate: step 2/2. It functions in the pathway cofactor biosynthesis; ubiquinone biosynthesis. In terms of biological role, methyltransferase required for the conversion of demethylmenaquinol (DMKH2) to menaquinol (MKH2) and the conversion of 2-polyprenyl-6-methoxy-1,4-benzoquinol (DDMQH2) to 2-polyprenyl-3-methyl-6-methoxy-1,4-benzoquinol (DMQH2). This is Ubiquinone/menaquinone biosynthesis C-methyltransferase UbiE from Shewanella putrefaciens (strain CN-32 / ATCC BAA-453).